Reading from the N-terminus, the 552-residue chain is Membrane protein insertase YidC (552 aa).

The next 5 helical transmembrane spans lie at 7–24 (VLWV…DNWQ), 364–384 (WGWA…PLSA), 434–454 (LPVV…LASV), 473–493 (PFFI…SLNP), and 508–528 (PIAF…YYVV).

The protein belongs to the OXA1/ALB3/YidC family. Type 1 subfamily. Interacts with the Sec translocase complex via SecD. Specifically interacts with transmembrane segments of nascent integral membrane proteins during membrane integration.

It is found in the cell inner membrane. Its function is as follows. Required for the insertion and/or proper folding and/or complex formation of integral membrane proteins into the membrane. Involved in integration of membrane proteins that insert both dependently and independently of the Sec translocase complex, as well as at least some lipoproteins. Aids folding of multispanning membrane proteins. This Burkholderia cenocepacia (strain HI2424) protein is Membrane protein insertase YidC.